The following is a 478-amino-acid chain: Glutamate--tRNA ligase (478 aa).

A 'HIGH' region motif is present at residues 15-25 (PSPTGFLHIGG). Residues 244-248 (KLSKR) carry the 'KMSKS' region motif. Lysine 247 is a binding site for ATP.

This sequence belongs to the class-I aminoacyl-tRNA synthetase family. Glutamate--tRNA ligase type 1 subfamily. Monomer.

The protein localises to the cytoplasm. The enzyme catalyses tRNA(Glu) + L-glutamate + ATP = L-glutamyl-tRNA(Glu) + AMP + diphosphate. Functionally, catalyzes the attachment of glutamate to tRNA(Glu) in a two-step reaction: glutamate is first activated by ATP to form Glu-AMP and then transferred to the acceptor end of tRNA(Glu). The protein is Glutamate--tRNA ligase of Bradyrhizobium sp. (strain ORS 278).